The sequence spans 610 residues: Solute carrier family 2, facilitated glucose transporter member 12 (610 aa).

Over 1–49 the chain is Cytoplasmic; it reads MDAPEESIRMTSDPQSKIYVQNPDTHIHLEQGPSAKSGNGRALVLCSVS. A helical membrane pass occupies residues 50 to 70; the sequence is VACLSGLLMGYEMSLISGALL. Residues 71-84 are Extracellular-facing; sequence QLRDVLTLSCPEQE. A helical transmembrane segment spans residues 85-105; sequence QVVGSLLLGAFLLSLGGGTIL. Over 106–118 the chain is Cytoplasmic; sequence DHYGRRFTIILTA. The chain crosses the membrane as a helical span at residues 119–139; the sequence is LLCVLGTLLSVCVVSFWALVV. The Extracellular portion of the chain corresponds to 140–141; the sequence is GR. A helical transmembrane segment spans residues 142 to 162; it reads MLVGMSVALSGTASCLYAAEV. Residues 163-176 lie on the Cytoplasmic side of the membrane; the sequence is APAAWRGRCVCVYE. The chain crosses the membrane as a helical span at residues 177–197; the sequence is LMVVLGMLLGFGLSWAFAGVP. The Extracellular segment spans residues 198–201; it reads DGWR. The chain crosses the membrane as a helical span at residues 202 to 222; the sequence is FTFGGALLPALLQAGVMPLLP. Residues 223–286 are Cytoplasmic-facing; the sequence is DSPRFLLAQQ…FQSRDNMLQR (64 aa). The helical transmembrane segment at 287-307 threads the bilayer; it reads LLVGAALVFLQQATGQPNILA. The Extracellular portion of the chain corresponds to 308 to 325; it reads YASTVLSSVGFHGNEAAT. A helical transmembrane segment spans residues 326 to 346; that stretch reads LASTGFGVVKVGGTIPAIFLV. Residues 347 to 353 are Cytoplasmic-facing; sequence DKVGPKA. Residues 354–374 form a helical membrane-spanning segment; it reads LLCVGVVVMMLSTATLGAITM. The Extracellular portion of the chain corresponds to 375–475; it reads QSRTHVSSLC…LHEVSPSLKW (101 aa). N-linked (GlcNAc...) asparagine glycosylation is found at asparagine 392, asparagine 429, and asparagine 438. Residues 476-496 traverse the membrane as a helical segment; that stretch reads ISLVSLLVYVAGFSISLGPMV. Residues 497–511 are Cytoplasmic-facing; it reads HVVLSAIFPTGIRGK. Residues 512 to 532 traverse the membrane as a helical segment; sequence AVSVISAFNWATNLLISMTFL. At 533–542 the chain is on the extracellular side; it reads TLTERIGLPT. A helical transmembrane segment spans residues 543–563; sequence VIFSYSAMSFLLVVFVIVFVP. Over 564–610 the chain is Cytoplasmic; that stretch reads ETKGRSLEQISKELAMKNHLRGTLLCHRRKHKATAQPSQEEKALATV.

It belongs to the major facilitator superfamily. Sugar transporter (TC 2.A.1.1) family. Glucose transporter subfamily. Expressed in the main insulin-sensitive tissues, such as cardiac muscle, skeletal muscle and adipose tissue.

The protein localises to the cell membrane. The protein resides in the endomembrane system. It is found in the cytoplasm. Its subcellular location is the perinuclear region. The enzyme catalyses D-glucose(out) = D-glucose(in). Its function is as follows. Insulin-regulated facilitative glucose transporter. This Danio rerio (Zebrafish) protein is Solute carrier family 2, facilitated glucose transporter member 12.